A 213-amino-acid polypeptide reads, in one-letter code: Histone H1.2 (213 aa).

Residues 1–17 (MSETAPAAPAAAPPAEK) show a composition bias toward low complexity. Residues 1–41 (MSETAPAAPAAAPPAEKAPVKKKAAKKAGGTPRKASGPPVS) form a disordered region. The residue at position 2 (Ser2) is an N-acetylserine; partial. Phosphoserine is present on Ser2. The residue at position 17 (Lys17) is an N6-acetyllysine. N6-(2-hydroxyisobutyryl)lysine is present on residues Lys23, Lys26, and Lys27. At Lys34 the chain carries N6-(beta-hydroxybutyryl)lysine; alternate. The residue at position 34 (Lys34) is an N6-crotonyllysine; alternate. N6-methyllysine; alternate is present on Lys34. An H15 domain is found at 36–109 (SGPPVSELIT…GASGSFKLNK (74 aa)). At Lys46 the chain carries N6-(2-hydroxyisobutyryl)lysine. The residue at position 52 (Lys52) is an N6-(beta-hydroxybutyryl)lysine; alternate. Residue Lys52 is modified to N6-(2-hydroxyisobutyryl)lysine; alternate. Arg54 is modified (citrulline). Lys63 is modified (N6-(2-hydroxyisobutyryl)lysine). Lys64 carries the N6-(beta-hydroxybutyryl)lysine; alternate modification. Lys64 bears the N6-crotonyllysine; alternate mark. Lys64 bears the N6-(2-hydroxyisobutyryl)lysine; alternate mark. N6-(2-hydroxyisobutyryl)lysine occurs at positions 75 and 81. 2 positions are modified to N6-(beta-hydroxybutyryl)lysine; alternate: Lys85 and Lys90. 3 positions are modified to N6-crotonyllysine; alternate: Lys85, Lys90, and Lys97. N6-(2-hydroxyisobutyryl)lysine; alternate is present on residues Lys85, Lys90, and Lys97. Residues 92-213 (TLVQTKGTGA…KPKKAAPKKK (122 aa)) form a disordered region. Position 97 is an N6-succinyllysine; alternate (Lys97). The residue at position 104 (Ser104) is a Phosphoserine; by PKC. Lys106 bears the N6-(beta-hydroxybutyryl)lysine mark. 5 positions are modified to N6-(2-hydroxyisobutyryl)lysine: Lys110, Lys117, Lys121, Lys129, and Lys136. The span at 119 to 140 (KVKKAGGTKPKKPVGAAKKPKK) shows a compositional bias: basic residues. Thr146 carries the post-translational modification Phosphothreonine. Lys148 carries the post-translational modification N6-(2-hydroxyisobutyryl)lysine. Residues 149–160 (KSAKKTPKKAKK) are compositionally biased toward basic residues. 2 positions are modified to N6-crotonyllysine; alternate: Lys159 and Lys168. N6-(2-hydroxyisobutyryl)lysine; alternate occurs at positions 159 and 168. Over residues 169–186 (KVAKSPKKAKVAKPKKAA) the composition is skewed to basic residues. Lys187 carries the post-translational modification N6-methyllysine; by EHMT1 and EHMT2. Ser188 is subject to ADP-ribosylserine. The segment covering 193–213 (VKPKAAKPKVVKPKKAAPKKK) has biased composition (basic residues). An N6-(2-hydroxyisobutyryl)lysine modification is found at Lys213.

Belongs to the histone H1/H5 family. As to quaternary structure, interacts with TSC22D1 isoforms 2 and 5. Post-translationally, H1 histones are progressively phosphorylated during the cell cycle, becoming maximally phosphorylated during late G2 phase and M phase, and being dephosphorylated sharply thereafter. Crotonylation (Kcr) is specifically present in male germ cells and marks testis-specific genes in post-meiotic cells, including X-linked genes that escape sex chromosome inactivation in haploid cells. Crotonylation marks active promoters and enhancers and confers resistance to transcriptional repressors. It is also associated with post-meiotically activated genes on autosomes. In terms of processing, citrullination at Arg-54 (H1R54ci) by PADI4 takes place within the DNA-binding site of H1 and results in its displacement from chromatin and global chromatin decondensation, thereby promoting pluripotency and stem cell maintenance. Post-translationally, ADP-ribosylated on Ser-188 in response to DNA damage.

It localises to the nucleus. The protein localises to the chromosome. In terms of biological role, histone H1 protein binds to linker DNA between nucleosomes forming the macromolecular structure known as the chromatin fiber. Histones H1 are necessary for the condensation of nucleosome chains into higher-order structured fibers. Also acts as a regulator of individual gene transcription through chromatin remodeling, nucleosome spacing and DNA methylation. The sequence is that of Histone H1.2 from Homo sapiens (Human).